Reading from the N-terminus, the 288-residue chain is Proline iminopeptidase (288 aa).

The AB hydrolase-1 domain maps to 27-274 (PVIVLHGGPG…SAHMPYIEEP (248 aa)). Catalysis depends on S101, which acts as the Nucleophile. The active site involves D240. The active-site Proton donor is H267.

This sequence belongs to the peptidase S33 family. In terms of assembly, monomer.

Its subcellular location is the cytoplasm. It catalyses the reaction Release of N-terminal proline from a peptide.. With respect to regulation, completely inhibited by p-chloromercuribenzoate (PCMB) and heavy metal salts. Partially inhibited by proline and proline derivatives with proline as the amino terminus. Enzyme inactivated by PCMB is reactivated by incubation with 2-mercaptoethanol. Releases the N-terminal proline from various substrates including at least dipeptides Pro-Pro, Pro-Gln, Pro-Trp and Pro-Tyr. Also acts on amides (Pro-beta NA) and oligopeptides including Pro-Leu-GlyNH2, Pro-Leu-Gly, Pro-Phe-Gly-Lys, Pro-Pro-Ala-OBut and Pro-Pro-Gly-(Pro-Pro-Gly)(4). Higher activity toward small peptides (up to three residues), but very low activity for longer peptides. Has no activity against p-nitrophenyl acetate, poly_L-proline, Met-Pro or amino acyl amides other than Pro-betaNA (Pyr-betaNA, Phe-betaNA, Cys-betaNA, Met-betaNA, Leu-betaNA, Ala-betaNA and Z-Gly-Pro-betaNA). The chain is Proline iminopeptidase (pip) from Heyndrickxia coagulans (Weizmannia coagulans).